Consider the following 159-residue polypeptide: Odorant-binding protein (159 aa).

Belongs to the calycin superfamily. Lipocalin family. Homodimer.

It localises to the secreted. In terms of biological role, this protein binds a wide variety of chemical odorants. This chain is Odorant-binding protein, found in Bos taurus (Bovine).